A 174-amino-acid chain; its full sequence is V-type proton ATPase catalytic subunit A (174 aa).

It belongs to the ATPase alpha/beta chains family. As to quaternary structure, V-ATPase is a heteromultimeric enzyme made up of two complexes: the ATP-hydrolytic V1 complex and the proton translocation V0 complex. The V1 complex consists of three catalytic AB heterodimers that form a heterohexamer, three peripheral stalks each consisting of EG heterodimers, one central rotor including subunits D and F, and the regulatory subunits C and H. The proton translocation complex V0 consists of the proton transport subunit a, a ring of proteolipid subunits c9c'', rotary subunit d, subunits e and f, and the accessory subunits ATP6AP1/Ac45 and ATP6AP2/PRR. Interacts with the V0 complex V-ATPase subunit a4 ATP6V0A4. Interacts with WFS1. Interacts with alpha-crystallin B chain/CRYAB and with MTOR, forming a ternary complex.

It localises to the cytoplasm. It is found in the cytosol. The protein localises to the cytoplasmic vesicle. The protein resides in the secretory vesicle. Its subcellular location is the clathrin-coated vesicle membrane. It localises to the lysosome. It carries out the reaction ATP + H2O + 4 H(+)(in) = ADP + phosphate + 5 H(+)(out). ATP hydrolysis occurs at the interface between the nucleotide-binding domains of subunits A and B. ATP hydrolysis triggers a conformational change in the subunits D and F, which induces a shift of subunit d. The c-ring is subsequently rotated and results in a continuous proton translocation across the membrane. Its function is as follows. Catalytic subunit of the V1 complex of vacuolar(H+)-ATPase (V-ATPase), a multisubunit enzyme composed of a peripheral complex (V1) that hydrolyzes ATP and a membrane integral complex (V0) that translocates protons. V-ATPase is responsible for acidifying and maintaining the pH of intracellular compartments and in some cell types, is targeted to the plasma membrane, where it is responsible for acidifying the extracellular environment. In aerobic conditions, involved in intracellular iron homeostasis, thus triggering the activity of Fe(2+) prolyl hydroxylase (PHD) enzymes, and leading to HIF1A hydroxylation and subsequent proteasomal degradation. May play a role in neurite development and synaptic connectivity. The protein is V-type proton ATPase catalytic subunit A of Mesocricetus auratus (Golden hamster).